Consider the following 86-residue polypeptide: YcgL domain-containing protein XCC3997 (86 aa).

Residues 1 to 83 (MHAYVYKSQR…PKTVVLAGEC (83 aa)) enclose the YcgL domain.

This is YcgL domain-containing protein XCC3997 from Xanthomonas campestris pv. campestris (strain ATCC 33913 / DSM 3586 / NCPPB 528 / LMG 568 / P 25).